The following is a 323-amino-acid chain: Cell division protein ZipA (323 aa).

Residues methionine 1 to arginine 5 lie on the Periplasmic side of the membrane. A helical transmembrane segment spans residues phenylalanine 6 to threonine 26. Residues serine 27–alanine 323 are Cytoplasmic-facing. The segment at phenylalanine 35 to aspartate 92 is disordered. Composition is skewed to basic and acidic residues over residues glycine 41–alanine 60 and glutamate 68–aspartate 78.

The protein belongs to the ZipA family. In terms of assembly, interacts with FtsZ via their C-terminal domains.

The protein resides in the cell inner membrane. In terms of biological role, essential cell division protein that stabilizes the FtsZ protofilaments by cross-linking them and that serves as a cytoplasmic membrane anchor for the Z ring. Also required for the recruitment to the septal ring of downstream cell division proteins. The polypeptide is Cell division protein ZipA (Vibrio campbellii (strain ATCC BAA-1116)).